Reading from the N-terminus, the 383-residue chain is 3-ketosteroid-9-alpha-monooxygenase, oxygenase component (383 aa).

The Rieske domain occupies 24–126 (WHCLGPVKNF…TDVRGGLLFV (103 aa)). Residues Cys65, His67, Cys84, and His87 each coordinate [2Fe-2S] cluster. Residues Asn173, His179, His184, and Asp302 each contribute to the Fe cation site.

Homotrimer. The two-component system 3-ketosteroid-9-alpha-monooxygenase is composed of an oxygenase component KshA and a reductase component KshB. [2Fe-2S] cluster serves as cofactor. Requires Fe cation as cofactor.

It carries out the reaction androsta-1,4-diene-3,17-dione + 2 reduced [2Fe-2S]-[ferredoxin] + O2 + 2 H(+) = 9alpha-hydroxyandrosta-1,4-diene-3,17-dione + 2 oxidized [2Fe-2S]-[ferredoxin] + H2O. The protein operates within lipid metabolism; steroid biosynthesis. Its function is as follows. Involved in the degradation of cholesterol. Catalyzes the introduction of a 9a-hydroxyl moiety into 1,4-androstadiene-3,17-dione (ADD) to yield the 9alpha-hydroxy-1,4-androstadiene-3,17-dione (9OHADD) intermediate which spontaneously form 3-hydroxy-9,10-seconandrost-1,3,5(10)-triene-9,17-dione (HSA) via the meta-cleavage of ring B with concomitant aromatization of ring A. The sequence is that of 3-ketosteroid-9-alpha-monooxygenase, oxygenase component (kshA) from Mycolicibacterium smegmatis (strain ATCC 700084 / mc(2)155) (Mycobacterium smegmatis).